The primary structure comprises 483 residues: Argininosuccinate lyase (483 aa).

This sequence belongs to the lyase 1 family. Argininosuccinate lyase subfamily.

The protein localises to the cytoplasm. The catalysed reaction is 2-(N(omega)-L-arginino)succinate = fumarate + L-arginine. It participates in amino-acid biosynthesis; L-arginine biosynthesis; L-arginine from L-ornithine and carbamoyl phosphate: step 3/3. The polypeptide is Argininosuccinate lyase (Albidiferax ferrireducens (strain ATCC BAA-621 / DSM 15236 / T118) (Rhodoferax ferrireducens)).